A 238-amino-acid polypeptide reads, in one-letter code: Urease accessory protein UreG (238 aa).

Positions 1–15 (MPPHLIDGEPHDHAH) are enriched in basic and acidic residues. The tract at residues 1-27 (MPPHLIDGEPHDHAHDRPKRQRTPGEP) is disordered. 34–41 (GPVGSGKT) is a binding site for GTP.

It belongs to the SIMIBI class G3E GTPase family. UreG subfamily. Homodimer. UreD, UreF and UreG form a complex that acts as a GTP-hydrolysis-dependent molecular chaperone, activating the urease apoprotein by helping to assemble the nickel containing metallocenter of UreC. The UreE protein probably delivers the nickel.

It localises to the cytoplasm. Its function is as follows. Facilitates the functional incorporation of the urease nickel metallocenter. This process requires GTP hydrolysis, probably effectuated by UreG. The protein is Urease accessory protein UreG of Nocardia farcinica (strain IFM 10152).